The primary structure comprises 95 residues: MPRSLKKGPFVDVKLMEKVKKALESGDKKPIKTWSRRSTIIPEFIGLTFAVHNGRKFIPVYVTENMIGHKLGEFAPTRTFKGHAGSEEKKKAKGK.

The protein belongs to the universal ribosomal protein uS19 family.

Functionally, protein S19 forms a complex with S13 that binds strongly to the 16S ribosomal RNA. The polypeptide is Small ribosomal subunit protein uS19 (Thermodesulfovibrio yellowstonii (strain ATCC 51303 / DSM 11347 / YP87)).